We begin with the raw amino-acid sequence, 428 residues long: Kynureninase (428 aa).

Pyridoxal 5'-phosphate is bound by residues Thr-104, Thr-105, 132-135, Asp-213, His-216, and Tyr-238; that span reads FPSD. The residue at position 239 (Lys-239) is an N6-(pyridoxal phosphate)lysine. Pyridoxal 5'-phosphate-binding residues include Trp-267 and Thr-295.

It belongs to the kynureninase family. As to quaternary structure, homodimer. The cofactor is pyridoxal 5'-phosphate.

The catalysed reaction is L-kynurenine + H2O = anthranilate + L-alanine + H(+). The enzyme catalyses 3-hydroxy-L-kynurenine + H2O = 3-hydroxyanthranilate + L-alanine + H(+). The protein operates within amino-acid degradation; L-kynurenine degradation; L-alanine and anthranilate from L-kynurenine: step 1/1. It participates in cofactor biosynthesis; NAD(+) biosynthesis; quinolinate from L-kynurenine: step 2/3. Catalyzes the cleavage of L-kynurenine (L-Kyn) and L-3-hydroxykynurenine (L-3OHKyn) into anthranilic acid (AA) and 3-hydroxyanthranilic acid (3-OHAA), respectively. The sequence is that of Kynureninase from Bacillus mycoides (strain KBAB4) (Bacillus weihenstephanensis).